A 710-amino-acid chain; its full sequence is Integrator complex subunit 10 (710 aa).

Phosphoserine occurs at positions 231, 381, and 382. A Glycyl lysine isopeptide (Lys-Gly) (interchain with G-Cter in SUMO2) cross-link involves residue lysine 464.

It belongs to the Integrator subunit 10 family. In terms of assembly, component of the Integrator complex, composed of core subunits INTS1, INTS2, INTS3, INTS4, INTS5, INTS6, INTS7, INTS8, INTS9/RC74, INTS10, INTS11/CPSF3L, INTS12, INTS13, INTS14 and INTS15. The core complex associates with protein phosphatase 2A subunits PPP2CA and PPP2R1A, to form the Integrator-PP2A (INTAC) complex. INTS10 is part of the tail subcomplex, composed of INTS10, INTS13, INTS14 and INTS15.

The protein resides in the nucleus. In terms of biological role, component of the integrator complex, a multiprotein complex that terminates RNA polymerase II (Pol II) transcription in the promoter-proximal region of genes. The integrator complex provides a quality checkpoint during transcription elongation by driving premature transcription termination of transcripts that are unfavorably configured for transcriptional elongation: the complex terminates transcription by (1) catalyzing dephosphorylation of the C-terminal domain (CTD) of Pol II subunit POLR2A/RPB1 and SUPT5H/SPT5, (2) degrading the exiting nascent RNA transcript via endonuclease activity and (3) promoting the release of Pol II from bound DNA. The integrator complex is also involved in terminating the synthesis of non-coding Pol II transcripts, such as enhancer RNAs (eRNAs), small nuclear RNAs (snRNAs), telomerase RNAs and long non-coding RNAs (lncRNAs). Within the integrator complex, INTS10 is part of the integrator tail module that acts as a platform for the recruitment of transcription factors at promoters. May be not involved in the recruitment of cytoplasmic dynein to the nuclear envelope, probably as component of the integrator complex. This Homo sapiens (Human) protein is Integrator complex subunit 10.